A 576-amino-acid polypeptide reads, in one-letter code: Septation ring formation regulator EzrA (576 aa).

The Extracellular segment spans residues 1-7; it reads MSSTVII. Residues 8 to 26 form a helical membrane-spanning segment; the sequence is LIVVLLVILVAFYAFAILM. At 27–576 the chain is on the cytoplasmic side; the sequence is RKKTEDRILA…FKNKPTPDYL (550 aa). Coiled-coil stretches lie at residues 105 to 134, 254 to 305, and 356 to 402; these read RARESVADSEAQIEMMEGDVEGIRQGVAQL, ENVN…FERE, and GYQE…IEKN.

It belongs to the EzrA family.

It is found in the cell membrane. Functionally, negative regulator of FtsZ ring formation; modulates the frequency and position of FtsZ ring formation. Inhibits FtsZ ring formation at polar sites. Interacts either with FtsZ or with one of its binding partners to promote depolymerization. This is Septation ring formation regulator EzrA from Lactococcus lactis subsp. cremoris (strain MG1363).